A 461-amino-acid polypeptide reads, in one-letter code: Protein ultraspiracle homolog (461 aa).

Positions 1-112 (MSSVAKKDKR…NHPLSGSKHL (112 aa)) are modulating. Positions 26 to 51 (PAPHQQQSMPSSQPSNFLQPLATPST) are disordered. Positions 27–40 (APHQQQSMPSSQPS) are enriched in low complexity. Positions 41-51 (NFLQPLATPST) are enriched in polar residues. 2 consecutive NR C4-type zinc fingers follow at residues 113-133 (CSIC…CEGC) and 149-173 (CRED…YQKC). Residues 113-185 (CSICGDRASG…CGMKREAVQE (73 aa)) constitute a DNA-binding region (nuclear receptor). The segment at 185 to 192 (EERQRAAR) is hinge. The NR LBD domain maps to 203-452 (VQELSIERLL…SYIHDALRNH (250 aa)).

Belongs to the nuclear hormone receptor family. NR2 subfamily. In terms of assembly, heterodimer of USP and ECR. Only the heterodimer is capable of high-affinity binding to ecdysone.

The protein resides in the nucleus. Receptor for ecdysone. May be an important modulator of insect metamorphosis. The protein is Protein ultraspiracle homolog (USP) of Manduca sexta (Tobacco hawkmoth).